Reading from the N-terminus, the 202-residue chain is Large ribosomal subunit protein bL25 (202 aa).

It belongs to the bacterial ribosomal protein bL25 family. CTC subfamily. In terms of assembly, part of the 50S ribosomal subunit; part of the 5S rRNA/L5/L18/L25 subcomplex. Contacts the 5S rRNA. Binds to the 5S rRNA independently of L5 and L18.

This is one of the proteins that binds to the 5S RNA in the ribosome where it forms part of the central protuberance. The chain is Large ribosomal subunit protein bL25 from Methylococcus capsulatus (strain ATCC 33009 / NCIMB 11132 / Bath).